Consider the following 331-residue polypeptide: MLSPERLALPDYEYLAQRHVLTYMEDAVCQLLENREDISQYGIARFFTEYFNSVCQGTHILFREFSFVQATPHNRVSFLRAFWRCFRTVGKNGDLLTMKEYHCLLQLLCPDFPLELTQKAARIVLMDDAMDCLMSFSDFLFAFQIQFYYSEFLDSVAAIYEDLLSGKNPNTVIVPTSSSGQHRQRPALGGAGTLEGVEASLFYQCLENLCDRHKYSCPPPALVKEALSNVQRLTFYGFLMALSKHRGINQALGALPDKGDLMHDPAMDEELERLLAQVPGLVNSVTASPEASCLPSRTPPRVGSPWRPLHHSRKVDGESDGSTEETDESET.

The required for interaction with PCM1 stretch occupies residues 1–111 (MLSPERLALP…HCLLQLLCPD (111 aa)). A required for interaction with TPGS1, LRRC49, and TTLL1 region spans residues 1-225 (MLSPERLALP…SCPPPALVKE (225 aa)). Residues 112–331 (FPLELTQKAA…STEETDESET (220 aa)) are required for interaction with TPGS2. Residues 288 to 331 (SPEASCLPSRTPPRVGSPWRPLHHSRKVDGESDGSTEETDESET) are disordered. The segment covering 318 to 331 (ESDGSTEETDESET) has biased composition (acidic residues). Phosphoserine is present on S319.

This sequence belongs to the CSTPP1 family. Interacts with PCM1. Interacts with TTLL1, TPGS1, TPGS2 and LRRC49; the interactions link CSTPP1 to the complex TPGC. Binds to alpha-tubulin.

It localises to the cytoplasm. The protein localises to the cytoskeleton. The protein resides in the microtubule organizing center. Its subcellular location is the centrosome. It is found in the centriolar satellite. Its function is as follows. Regulator of the tubulin polyglutamylase complex (TPGC) that controls cytoskeletal organization, nuclear shape, and cilium disassembly by balancing microtubule and actin assembly. Regulates the assembly and stability of the TPGC and thereby modulates polyglutamylation of the microtubule, which antagonizes MAP4 binding. The sequence is that of Centriolar satellite-associated tubulin polyglutamylase complex regulator 1 from Homo sapiens (Human).